The primary structure comprises 219 residues: Probable GTP-binding protein EngB (219 aa).

Residues 40–212 enclose the EngB-type G domain; that stretch reads LLPEIAFIGK…KASLAKCIIK (173 aa). Residues 48–55, 75–79, 93–96, 160–163, and 191–193 each bind GTP; these read GKSNVGKS, GRTGQ, DLPG, TKFD, and VSS. Positions 55 and 77 each coordinate Mg(2+).

This sequence belongs to the TRAFAC class TrmE-Era-EngA-EngB-Septin-like GTPase superfamily. EngB GTPase family. The cofactor is Mg(2+).

Functionally, necessary for normal cell division and for the maintenance of normal septation. The polypeptide is Probable GTP-binding protein EngB (Rickettsia canadensis (strain McKiel)).